Here is a 405-residue protein sequence, read N- to C-terminus: MSSVDILVPDLPESVADATVATWHKKPGDAVVRDEVLVEIETDKVVLEVPASADGILDAVLEDEGTTVTSRQILGRLREGNSAGKETSAKSEEKASTPAQRQQASLEEQNNDALSPAIRRLLAEHNLDASAIKGTGVGGRLTREDVEKHLAKAPAKESAPAAAAPAAQPALAARSEKRVPMTRLRKRVAERLLEAKNSTAMLTTFNEVNMKPIMDLRKQYGEAFEKRHGIRLGFMSFYVKAVVEALKRYPEVNASIDGDDVVYHNYFDVSMAVSTPRGLVTPVLRDVDTLGMADIEKKIKELAVKGRDGKLTVEDLTGGNFTITNGGVFGSLMSTPIINPPQSAILGMHAIKDRPMAVNGQVEILPMMYLALSYDHRLIDGRESVGFLVTIKELLEDPTRLLLDV.

Residues 3–78 (SVDILVPDLP…TSRQILGRLR (76 aa)) enclose the Lipoyl-binding domain. At K44 the chain carries N6-lipoyllysine. Residues 75–111 (GRLREGNSAGKETSAKSEEKASTPAQRQQASLEEQNN) are disordered. The span at 97–111 (TPAQRQQASLEEQNN) shows a compositional bias: polar residues. The Peripheral subunit-binding (PSBD) domain maps to 113–150 (ALSPAIRRLLAEHNLDASAIKGTGVGGRLTREDVEKHL). K148 carries the N6-acetyllysine modification. Low complexity predominate over residues 153–173 (APAKESAPAAAAPAAQPALAA). Residues 153–178 (APAKESAPAAAAPAAQPALAARSEKR) form a disordered region. Active-site residues include H376 and D380.

The protein belongs to the 2-oxoacid dehydrogenase family. In terms of assembly, forms a 24-polypeptide structural core with octahedral symmetry. Part of the 2-oxoglutarate dehydrogenase (OGDH) complex composed of E1 (2-oxoglutarate dehydrogenase), E2 (dihydrolipoamide succinyltransferase) and E3 (dihydrolipoamide dehydrogenase); the complex contains multiple copies of the three enzymatic components (E1, E2 and E3). Interacts with SucA (via N-terminus), the E1 component of OGDH complex. (R)-lipoate is required as a cofactor.

The catalysed reaction is N(6)-[(R)-dihydrolipoyl]-L-lysyl-[protein] + succinyl-CoA = N(6)-[(R)-S(8)-succinyldihydrolipoyl]-L-lysyl-[protein] + CoA. It participates in amino-acid degradation; L-lysine degradation via saccharopine pathway; glutaryl-CoA from L-lysine: step 6/6. Its function is as follows. E2 component of the 2-oxoglutarate dehydrogenase (OGDH) complex which catalyzes the second step in the conversion of 2-oxoglutarate to succinyl-CoA and CO(2). In Escherichia coli O157:H7, this protein is Dihydrolipoyllysine-residue succinyltransferase component of 2-oxoglutarate dehydrogenase complex (sucB).